Consider the following 205-residue polypeptide: FMN-dependent NADH:quinone oxidoreductase (205 aa).

FMN is bound by residues Ser10, 16–18 (SHS), and 96–99 (MYNF).

This sequence belongs to the azoreductase type 1 family. Homodimer. The cofactor is FMN.

It carries out the reaction 2 a quinone + NADH + H(+) = 2 a 1,4-benzosemiquinone + NAD(+). The enzyme catalyses N,N-dimethyl-1,4-phenylenediamine + anthranilate + 2 NAD(+) = 2-(4-dimethylaminophenyl)diazenylbenzoate + 2 NADH + 2 H(+). Quinone reductase that provides resistance to thiol-specific stress caused by electrophilic quinones. Functionally, also exhibits azoreductase activity. Catalyzes the reductive cleavage of the azo bond in aromatic azo compounds to the corresponding amines. The chain is FMN-dependent NADH:quinone oxidoreductase from Nostoc punctiforme (strain ATCC 29133 / PCC 73102).